The primary structure comprises 331 residues: Gamma-parvin (331 aa).

The residue at position 1 (methionine 1) is an N-acetylmethionine. Residues 18-38 form a disordered region; the sequence is QPTEEELPRGGKKKYLSPNSK. Calponin-homology (CH) domains follow at residues 44–151 and 210–317; these read EELQ…KRFQ and HAVQ…QKHS.

It belongs to the parvin family. Interacts with ILK; the interaction promotes the establishment of cell polarity required for leukocyte migration. Interacts with ARHGEF6; the guanine nucleotide exchange factor activity of ARHGEF6 is essential for the PARVG-induced enhancement of cell spreading. As to expression, expressed strongly in spleen and testis, moderately in lung and weakly in brain and heart.

The protein localises to the cell junction. It localises to the focal adhesion. The protein resides in the cell membrane. Its subcellular location is the cytoplasm. It is found in the cytoskeleton. Plays a role with ILK in promoting the cell adhesion and spreading of leukocytes. In Mus musculus (Mouse), this protein is Gamma-parvin (Parvg).